The sequence spans 160 residues: GTP-dependent dephospho-CoA kinase (160 aa).

Asp45, Ile46, Val47, Asp59, Lys61, Glu108, and Asp130 together coordinate GTP.

Belongs to the GTP-dependent DPCK family.

The catalysed reaction is 3'-dephospho-CoA + GTP = GDP + CoA + H(+). The protein operates within cofactor biosynthesis; coenzyme A biosynthesis. Functionally, catalyzes the GTP-dependent phosphorylation of the 3'-hydroxyl group of dephosphocoenzyme A to form coenzyme A (CoA). In Staphylothermus marinus (strain ATCC 43588 / DSM 3639 / JCM 9404 / F1), this protein is GTP-dependent dephospho-CoA kinase.